The sequence spans 225 residues: Endo-1,4-beta-xylanase (225 aa).

An N-terminal signal peptide occupies residues Met-1 to Arg-31. A Pyrrolidone carboxylic acid modification is found at Gln-32. The GH11 domain maps to Gln-32–Ala-222. The active-site Nucleophile is the Glu-117. A disulfide bridge links Cys-141 with Cys-185. The active-site Proton donor is Glu-209.

It carries out the reaction Endohydrolysis of (1-&gt;4)-beta-D-xylosidic linkages in xylans.. It participates in glycan degradation; xylan degradation. The polypeptide is Endo-1,4-beta-xylanase (XYNA) (Thermomyces lanuginosus (Humicola lanuginosa)).